The primary structure comprises 317 residues: L-lactate dehydrogenase (317 aa).

Residues V17, D38, K43, Y68, and 82–83 (GV) each bind NAD(+). A substrate-binding site is contributed by R91. NAD(+) is bound by residues S104, 121–123 (VSN), and S146. Position 123 to 126 (123 to 126 (NPVD)) interacts with substrate. 151 to 154 (DTSR) lines the substrate pocket. 2 residues coordinate beta-D-fructose 1,6-bisphosphate: K156 and H171. H178 acts as the Proton acceptor in catalysis. Y224 is subject to Phosphotyrosine. T233 is a substrate binding site.

Belongs to the LDH/MDH superfamily. LDH family. Homotetramer.

The protein resides in the cytoplasm. It catalyses the reaction (S)-lactate + NAD(+) = pyruvate + NADH + H(+). It functions in the pathway fermentation; pyruvate fermentation to lactate; (S)-lactate from pyruvate: step 1/1. With respect to regulation, allosterically activated by fructose 1,6-bisphosphate (FBP). Catalyzes the conversion of lactate to pyruvate. The sequence is that of L-lactate dehydrogenase from Clostridium perfringens (strain SM101 / Type A).